The chain runs to 215 residues: Protein Syd (215 aa).

It belongs to the Syd family.

It localises to the cell inner membrane. In terms of biological role, interacts with the SecY protein in vivo. May bind preferentially to an uncomplexed state of SecY, thus functioning either as a chelating agent for excess SecY in the cell or as a regulatory factor that negatively controls the translocase function. The chain is Protein Syd from Shewanella piezotolerans (strain WP3 / JCM 13877).